The following is a 225-amino-acid chain: Histone-arginine methyltransferase METTL23 (225 aa).

This sequence belongs to the methyltransferase superfamily. METTL23 family. As to quaternary structure, interacts with HSPA5, HSP90B1, TUBULIN, UGGT1 and UGGT2. Interacts with TET3. Interacts with STPG4.

It localises to the nucleus. Its subcellular location is the cytoplasm. It catalyses the reaction L-arginyl-[protein] + 2 S-adenosyl-L-methionine = N(omega),N(omega)-dimethyl-L-arginyl-[protein] + 2 S-adenosyl-L-homocysteine + 2 H(+). Functionally, histone methyltransferase that dimethylates histone H3 at 'Arg-17', forming asymmetric dimethylarginine (H3R17me2a), leading to activate transcription via chromatin remodeling. Maternal factor involved in epigenetic chromatin reprogramming of the paternal genome in the zygote: mediates H3R17me2a, promoting histone H3.3 incorporation in the male pronucleus, leading to TET3 recruitment and subsequent DNA demethylation. The chain is Histone-arginine methyltransferase METTL23 from Rattus norvegicus (Rat).